Consider the following 1062-residue polypeptide: Valine--tRNA ligase, mitochondrial (1062 aa).

Residues 1-15 (MPHLPLASFRPPLRG) constitute a mitochondrion transit peptide. A disordered region spans residues 1–73 (MPHLPLASFR…AKGKPPAEST (73 aa)). Over residues 42 to 56 (RNREAKQKRLREKQA) the composition is skewed to basic and acidic residues. Positions 146–156 (PNVTGSLHIGH) match the 'HIGH' region motif. Residues 659-663 (KMSKS) carry the 'KMSKS' region motif. Lysine 662 contacts ATP.

The protein belongs to the class-I aminoacyl-tRNA synthetase family.

Its subcellular location is the mitochondrion. It carries out the reaction tRNA(Val) + L-valine + ATP = L-valyl-tRNA(Val) + AMP + diphosphate. Functionally, catalyzes the attachment of valine to tRNA(Val) in a two-step reaction: valine is first activated by ATP to form Val-AMP and then transferred to the acceptor end of tRNA(Val). The protein is Valine--tRNA ligase, mitochondrial (VARS2) of Sus scrofa (Pig).